Reading from the N-terminus, the 72-residue chain is MANRPLDILNNALDTPVIVRLKGAREFRGELKGYDIHMNLVLDNAEELRDGEVVSKFSSVVIRGDNVVYVSP.

Residues 4 to 72 (RPLDILNNAL…RGDNVVYVSP (69 aa)) form the Sm domain.

This sequence belongs to the snRNP Sm proteins family.

This chain is Putative snRNP Sm-like protein, found in Methanosarcina acetivorans (strain ATCC 35395 / DSM 2834 / JCM 12185 / C2A).